We begin with the raw amino-acid sequence, 2038 residues long: Non-reducing polyketide synthase ZEA1 (2038 aa).

Residues 9-246 are N-terminal acylcarrier protein transacylase domain (SAT); sequence LLFGDQTDSW…NELNIHALQH (238 aa). Residues 364–794 form the Ketosynthase family 3 (KS3) domain; the sequence is PGRIAIVGMA…GGNACILLED (431 aa). Catalysis depends on for beta-ketoacyl synthase activity residues C537, H672, and H711. A malonyl-CoA:ACP transacylase (MAT) domain region spans residues 888-1172; the sequence is VFVFTGQGSH…VCSSFVRATL (285 aa). Catalysis depends on S979, which acts as the For acyl/malonyl transferase activity. Residues 1221 to 1572 form a product template (PT) domain region; it reads SLLNLPTYAW…HFHEVENAVL (352 aa). Residues 1254–1405 are N-terminal hotdog fold; the sequence is HETFKANIST…GQLIQARWDK (152 aa). Residues 1254–1573 enclose the PKS/mFAS DH domain; that stretch reads HETFKANIST…FHEVENAVLD (320 aa). The segment at 1425–1573 is C-terminal hotdog fold; sequence ISHRLQPQIL…FHEVENAVLD (149 aa). The region spanning 1616–1693 is the Carrier domain; sequence QSDAHVLDSI…DLRRVFAPKS (78 aa). S1653 is modified (O-(pantetheine 4'-phosphoryl)serine). Residues 1700 to 1738 are disordered; it reads NDLSRPSLVDDTSQALQSSGSESFDQPPTSVTSTSDSGS. A compositionally biased stretch (polar residues) spans 1709–1737; it reads DDTSQALQSSGSESFDQPPTSVTSTSDSG. The tract at residues 1778 to 1882 is thioesterase (TE) domain; that stretch reads TGTIATYIHL…PRSKTVEDKN (105 aa). H2021 serves as the catalytic For thioesterase activity.

Its pathway is mycotoxin biosynthesis. In terms of biological role, non-reducing polyketide synthase; part of the gene cluster that mediates the biosynthesis of zearalenone (ZEA), a nonsteroid estrogen that is a contaminant of cereal grains and causes estrogenic disorders in humans and animals. The ZEA backbone is synthesized from a single acetyl-CoA molecule and eight malonyl-CoA molecules. The reducing polyketide synthase ZEA2 is proposed to synthesize a reduced hexaketide intermediate by using different combinations of its reductive domains during each round of condensation. The hexaketide thioester is then transacylated to the non-reducing polyketide synthase ZEA1 and is further condensed with three malonyl-CoAs without reductive tailoring to yield a mixed reduced/unreduced nonaketide. ZEA1 must be able to interact with ZEA2 to facilitate starter-unit acyltransfer and initiate polyketide biosynthesis. ZEA1 also mediates the required C2-C7 cyclization to form the resorcylate core and catalyzes the formation of the macrolactone. ZEA1 exhibits broad starter-unit specificities toward fatty acyl-CoAs ranging in sizes between C6 and C16 and displays the highest activity toward decanoyl-CoA. ZEB1 is then responsible for the chemical conversion of beta-zearalenonol (beta-ZOL) to ZEA in the biosynthetic pathway. The protein is Non-reducing polyketide synthase ZEA1 of Gibberella zeae (strain ATCC MYA-4620 / CBS 123657 / FGSC 9075 / NRRL 31084 / PH-1) (Wheat head blight fungus).